We begin with the raw amino-acid sequence, 197 residues long: NADH-quinone oxidoreductase subunit C (197 aa).

It belongs to the complex I 30 kDa subunit family. NDH-1 is composed of 14 different subunits. Subunits NuoB, C, D, E, F, and G constitute the peripheral sector of the complex.

The protein resides in the cell inner membrane. It catalyses the reaction a quinone + NADH + 5 H(+)(in) = a quinol + NAD(+) + 4 H(+)(out). Its function is as follows. NDH-1 shuttles electrons from NADH, via FMN and iron-sulfur (Fe-S) centers, to quinones in the respiratory chain. The immediate electron acceptor for the enzyme in this species is believed to be ubiquinone. Couples the redox reaction to proton translocation (for every two electrons transferred, four hydrogen ions are translocated across the cytoplasmic membrane), and thus conserves the redox energy in a proton gradient. The chain is NADH-quinone oxidoreductase subunit C from Caulobacter vibrioides (strain ATCC 19089 / CIP 103742 / CB 15) (Caulobacter crescentus).